The sequence spans 185 residues: Orotate phosphoribosyltransferase (185 aa).

Residues R102, K103, K106, H108, and 128-136 (DDVITTGGS) contribute to the 5-phospho-alpha-D-ribose 1-diphosphate site. Residues T132 and R160 each coordinate orotate.

The protein belongs to the purine/pyrimidine phosphoribosyltransferase family. PyrE subfamily. In terms of assembly, homodimer. The cofactor is Mg(2+).

It catalyses the reaction orotidine 5'-phosphate + diphosphate = orotate + 5-phospho-alpha-D-ribose 1-diphosphate. It participates in pyrimidine metabolism; UMP biosynthesis via de novo pathway; UMP from orotate: step 1/2. Its function is as follows. Catalyzes the transfer of a ribosyl phosphate group from 5-phosphoribose 1-diphosphate to orotate, leading to the formation of orotidine monophosphate (OMP). The polypeptide is Orotate phosphoribosyltransferase (Leptospira biflexa serovar Patoc (strain Patoc 1 / Ames)).